A 254-amino-acid polypeptide reads, in one-letter code: Acidic endochitinase (254 aa).

An N-terminal signal peptide occupies residues 1-23 (MKFWGSVLALSFVVFLFLTGTLA). Residue Glu-91 is the Proton donor of the active site. Residues Cys-213 and Cys-245 are joined by a disulfide bond.

Belongs to the glycosyl hydrolase 19 family. Chitinase class II subfamily.

It localises to the secreted. It carries out the reaction Random endo-hydrolysis of N-acetyl-beta-D-glucosaminide (1-&gt;4)-beta-linkages in chitin and chitodextrins.. Functionally, defense against chitin-containing fungal pathogens. This is Acidic endochitinase from Petunia hybrida (Petunia).